A 385-amino-acid chain; its full sequence is 3-hydroxyisobutyryl-CoA hydrolase, mitochondrial (385 aa).

A mitochondrion-targeting transit peptide spans 1–32 (MGQPYAWRLLSRVSSFRRASVILQHLRMSMHT). 3 positions are modified to N6-acetyllysine; alternate: K54, K91, and K100. N6-succinyllysine; alternate occurs at positions 54, 91, and 100. E120, G145, E168, and D176 together coordinate substrate. At K220 the chain carries N6-acetyllysine; alternate. At K220 the chain carries N6-succinyllysine; alternate. Position 233 is a phosphoserine (S233). N6-succinyllysine is present on residues K249 and K256. K296 is modified (N6-acetyllysine; alternate). K296 bears the N6-succinyllysine; alternate mark. K300 is subject to N6-succinyllysine. K352 is modified (N6-acetyllysine; alternate). K352 carries the post-translational modification N6-succinyllysine; alternate. N6-acetyllysine occurs at positions 359 and 364. K376 carries the N6-succinyllysine modification.

This sequence belongs to the enoyl-CoA hydratase/isomerase family.

The protein resides in the mitochondrion. It catalyses the reaction 3-hydroxy-2-methylpropanoyl-CoA + H2O = 3-hydroxy-2-methylpropanoate + CoA + H(+). Its pathway is amino-acid degradation; L-valine degradation. Its function is as follows. Hydrolyzes 3-hydroxyisobutyryl-CoA (HIBYL-CoA), a saline catabolite. Has high activity toward isobutyryl-CoA. Could be an isobutyryl-CoA dehydrogenase that functions in valine catabolism. Also hydrolyzes 3-hydroxypropanoyl-CoA. This chain is 3-hydroxyisobutyryl-CoA hydrolase, mitochondrial (Hibch), found in Mus musculus (Mouse).